A 2508-amino-acid chain; its full sequence is MFIYLFIYLFFKMDKKRTFYYLFFFFTFLVYVLYFDNIKSVLRSSTKKKKKKKICKSTFYVHEESEEIKSWLRNSNERDKGKKFFIFERLIKERKYICVNKYKRNNKLKWIYKNTYEKTKNICDDYNILFKCIKGIIYDKNKETFFETFFENFWDNIFYMNKYIFNIYYYMFDYTKKVKKKIEGIKENMNIRHNNNYNNIFYVHKFFLFNDDEEKKKRNDDIKINIKLHNNTRKLSVSEENVELKPYIKQGERNETVVNLYEYFTGGVKRSNNNNEIVVTSTEQFHRIVIICFKPTVKHSHIITSPHDALNHIVEENDKIKLSEEIYSIPFYPIYGNLGLKNVITTGIVEFMIPYFSRTQMNFTVTCANGEMNDLYKFEDLIKIRIRIPRNTKKILGLSTNEKDKTVFERIVDNTSNEYRFKSYNNKIVGIKLENSILDPPGCFKTVYEDDKILQLEVFLQYVKCINLDRDNYKIRFFFLPEDFGDEEIEFSCKFTYKKKTSKIIFGLGETSVDKDIFYLEDEHVKLNINQDISGDEPYYSHLNYNGIPYNICNFQYKSEYDSQVCERTIHEFSLFIYNCDTLVGTQIQTTEPITSVKYLNSTYPINKFSDITLLSKDIDIEGLEEAFRNSKFFLTSYINHGPFPLIIECVISNSNKDYQNVYILLHLRTSIKNRSVSFCDFEKVQGYNYLNNYIDGKICNINITSNSVFGFRCPSNSIKEPKDCFSQVYIDKKVYKLNDKLSNKLILYSMKQENLAIAGFNNYISNSFSFECYCIDKNQTYSSYERTSGEDIFNHIVKRIHVHYKNYDELYDYNIHDKITYEPIMKNPPITYLCDFLNKKQILQPLNNKTKNYICTIWYPKPLNYIALNCPTNRRDEQNDQTISEVYNSLQKDLLKPTGIEQQIDQKKKELNLLFNKRNIYSNLYHLPKNAPKRTINKNGLNIVNIDEIIPGILIKDVINMKLEDVIKPDLLTPTSFLHKTYNTNKSYLFSTRNKSTSVFNTPSIYTPLTHTSFSISPKSVPLTKSRIEETHSSSNTYEQYIGKRNSIENGFFIFQLPPYLKKNQTIEFACINDSTIKNKNVGNNGIMTIHLKSFGNPIEGCYFYKNSAKYNYLKKSIKIDDLKKEECTIRSDGEIEFVGIMCPYENNLYLTPSSCFLKTYDNTDNLVELLDINENFEYYSNDKGISYLKIPQEFLNHVHLFCYCNVDKDSVSDTNVLVKKENKISLELNYSNKGFNIIKTIDYQYEADILIGYSYYFKRVTPIYRKKHICDFTTEDNSLEPESEDKMIYSCYLSLENNLNFIEVKCPKNKKSSNSEWLFKYGTFDKSSEIMEDDENIKKYEHMKYMPEDKDEIIYLFKKQKLEDILPGVIIFDKNRYFFEKGNFSFVTPLIVKEDVTIKLLCDNSETKIDDKIGKKGIILIKIPQHITDKKFYGCDFSGDSNKKSSFYYTSVYDLKTQNQYCEVKLKENIIISLNCPNGNINPNNCFNNVFLKTNMNEQIHEKIQNIFDQVKVINTKSHVLLNSSSTFLIISKITKKELNFFCTCHHNETKNVGTIYIKNEDIINFSKAYNKESSILQYIDVTPYYLKDTYICDFTQNHYSISFDTSVNVQNVLERYLKILSDLYNTHEEFTYFSIHLKLKKEIMKKKYIDYLKKKINEYKEKETSDKIKRVTLSTNDNINTILVYRCNIDLGSFDKFKIKCPSKLNEEEVENNKLYPNLIYSSNLGLDETDMLNGLTKLLYGSVLINKTEKNVSFFEKGELELIISPYTDSSKNIIFSCENVPRNLSKGIIGSASIFIKKNDNKILGCDFIDTPSTLSSASTLESSYGSHASSPLSSSHHVLHNDNQGHDVHMINHIDISNKKNSFEFEIELIEGKNTYCNIEAIENDIVGFSCPYNFLTTPSDCFESIQIEGVDKELETHKLEKLLKGVKILNNDIYKYNFTPSYIILPKKIKKSLKIFCRCNSVKLIKTGIIQINIVGDDLNNWFKKEITHNIFAYQKMDYFYDFSKGPTNISSENVLGISTMSLMSSNKKVSRKKNHKEENRTQQNVYKEIENDHKNINENVNKYDNLPVTLLSSDEGDGYQADEDIGGEDDAEDVDGEGDDEDDNILNPLRTKQVYDIIVAASEFSKIEVVCPLRNSSQFRQSKISPENFFEYVYVLEDKNDDKRKRSIEENEKLVKAILEGKKNIDGHIINIEDINNKKSSKNASVEYDDMGNKIFISIISEKPKAVIGDNISSSRSSVHISNNIMNSSFQSNIHPDPITSDTTTSEYEQYNSYFKDILVIKNINEVISFANIKIDINEQTYSSSLHIPPLILKDAEFLISCDNSLTLNENTRGKTATVKIKVKSNFLKIYGCDFVGEFSTHFLFSKKWDDIPKNYICKINIQDDMLIGLACPSFTKLHPPDCFENIIVNQNVYKKNIIMETKNMFFYKQNDKPILSFVHVKKILVETFLCKCYQVTKADYKEVTIQILYEPYVMGTPKYTLEKSIIQYRYANLKPPLHI.

The first 34 residues, 1–34 (MFIYLFIYLFFKMDKKRTFYYLFFFFTFLVYVLY), serve as a signal peptide directing secretion. 4 N-linked (GlcNAc...) asparagine glycosylation sites follow: asparagine 230, asparagine 254, asparagine 362, and asparagine 414. The 123-residue stretch at 394–516 (KILGLSTNEK…GLGETSVDKD (123 aa)) folds into the 6-Cys 1 domain. Cysteine 443 and cysteine 493 are disulfide-bonded. Residues asparagine 601 and asparagine 674 are each glycosylated (N-linked (GlcNAc...) asparagine). 6-Cys domains are found at residues 676–800 (SVSF…IVKR), 831–1096 (ITYL…LKSF), 1099–1231 (PIEG…LELN), 1268–1428 (KKHI…IPQH), and 1433–1565 (KFYG…NEDI). A disulfide bond links cysteine 680 and cysteine 700. Asparagine 703 is a glycosylation site (N-linked (GlcNAc...) asparagine). 2 disulfides stabilise this stretch: cysteine 714–cysteine 775 and cysteine 725–cysteine 773. N-linked (GlcNAc...) asparagine glycans are attached at residues asparagine 779, asparagine 849, asparagine 986, asparagine 995, asparagine 1065, and asparagine 1074. 2 cysteine pairs are disulfide-bonded: cysteine 835–cysteine 856 and cysteine 871–cysteine 1072. Cystine bridges form between cysteine 1103/cysteine 1129, cysteine 1144/cysteine 1206, and cysteine 1157/cysteine 1204. A glycan (N-linked (GlcNAc...) asparagine) is linked at asparagine 1231. Cystine bridges form between cysteine 1272/cysteine 1293, cysteine 1308/cysteine 1404, cysteine 1437/cysteine 1464, cysteine 1478/cysteine 1547, and cysteine 1488/cysteine 1545. Asparagine 1385 is a glycosylation site (N-linked (GlcNAc...) asparagine). Asparagine 1525, asparagine 1550, asparagine 1567, asparagine 1750, asparagine 1755, and asparagine 1788 each carry an N-linked (GlcNAc...) asparagine glycan. 2 consecutive 6-Cys domains span residues 1656 to 1804 (KKKI…IKKN) and 1807 to 1984 (KILG…IVGD). A disulfide bond links cysteine 1704 and cysteine 1782. Intrachain disulfides connect cysteine 1811/cysteine 1883, cysteine 1897/cysteine 1966, and cysteine 1908/cysteine 1964. Asparagine 2016 and asparagine 2047 each carry an N-linked (GlcNAc...) asparagine glycan. The segment at 2081–2113 (SDEGDGYQADEDIGGEDDAEDVDGEGDDEDDNI) is disordered. Residues 2082–2112 (DEGDGYQADEDIGGEDDAEDVDGEGDDEDDN) show a composition bias toward acidic residues. Residues asparagine 2143, asparagine 2211, asparagine 2239, and asparagine 2255 are each glycosylated (N-linked (GlcNAc...) asparagine). 6-Cys domains are found at residues 2197-2354 (IINI…VKSN) and 2357-2481 (KIYG…YEPY). 3 disulfides stabilise this stretch: cysteine 2361/cysteine 2386, cysteine 2400/cysteine 2461, and cysteine 2411/cysteine 2459.

The protein localises to the cell surface. Its subcellular location is the cell membrane. In terms of biological role, plays an essential role in male gamete fertility. Required for the binding to erythrocytes and thus, for the formation of exflagellation centers. The polypeptide is Male gametocyte surface protein P230p (PFS230P) (Plasmodium falciparum (isolate 3D7)).